A 162-amino-acid polypeptide reads, in one-letter code: Cyclic pyranopterin monophosphate synthase (162 aa).

Residues leucine 75–histidine 77 and methionine 113–glutamate 114 contribute to the substrate site. Residue aspartate 128 is part of the active site.

This sequence belongs to the MoaC family. Homohexamer; trimer of dimers.

The catalysed reaction is (8S)-3',8-cyclo-7,8-dihydroguanosine 5'-triphosphate = cyclic pyranopterin phosphate + diphosphate. The protein operates within cofactor biosynthesis; molybdopterin biosynthesis. Functionally, catalyzes the conversion of (8S)-3',8-cyclo-7,8-dihydroguanosine 5'-triphosphate to cyclic pyranopterin monophosphate (cPMP). The chain is Cyclic pyranopterin monophosphate synthase from Burkholderia ambifaria (strain MC40-6).